Reading from the N-terminus, the 141-residue chain is ATP synthase epsilon chain (141 aa).

It belongs to the ATPase epsilon chain family. F-type ATPases have 2 components, CF(1) - the catalytic core - and CF(0) - the membrane proton channel. CF(1) has five subunits: alpha(3), beta(3), gamma(1), delta(1), epsilon(1). CF(0) has three main subunits: a, b and c.

It localises to the cell membrane. Its function is as follows. Produces ATP from ADP in the presence of a proton gradient across the membrane. The sequence is that of ATP synthase epsilon chain from Lactococcus lactis subsp. cremoris (strain SK11).